The chain runs to 164 residues: Cyclic pyranopterin monophosphate synthase (164 aa).

Residues 77–79 and 115–116 each bind substrate; these read LCH and ME. Asp-130 is a catalytic residue.

This sequence belongs to the MoaC family. In terms of assembly, homohexamer; trimer of dimers.

The enzyme catalyses (8S)-3',8-cyclo-7,8-dihydroguanosine 5'-triphosphate = cyclic pyranopterin phosphate + diphosphate. It functions in the pathway cofactor biosynthesis; molybdopterin biosynthesis. In terms of biological role, catalyzes the conversion of (8S)-3',8-cyclo-7,8-dihydroguanosine 5'-triphosphate to cyclic pyranopterin monophosphate (cPMP). This is Cyclic pyranopterin monophosphate synthase from Sinorhizobium medicae (strain WSM419) (Ensifer medicae).